The sequence spans 603 residues: Elongation factor 4 (603 aa).

Positions 7–189 (SRIRNFCIIA…SIVHLVPPPS (183 aa)) constitute a tr-type G domain. Residues 19–24 (DHGKST) and 136–139 (NKID) each bind GTP.

Belongs to the TRAFAC class translation factor GTPase superfamily. Classic translation factor GTPase family. LepA subfamily.

The protein resides in the cell inner membrane. The enzyme catalyses GTP + H2O = GDP + phosphate + H(+). In terms of biological role, required for accurate and efficient protein synthesis under certain stress conditions. May act as a fidelity factor of the translation reaction, by catalyzing a one-codon backward translocation of tRNAs on improperly translocated ribosomes. Back-translocation proceeds from a post-translocation (POST) complex to a pre-translocation (PRE) complex, thus giving elongation factor G a second chance to translocate the tRNAs correctly. Binds to ribosomes in a GTP-dependent manner. In Crocosphaera subtropica (strain ATCC 51142 / BH68) (Cyanothece sp. (strain ATCC 51142)), this protein is Elongation factor 4.